We begin with the raw amino-acid sequence, 551 residues long: Nicotianamine aminotransferase B (551 aa).

The interval 24–127 (KSNGHGVAAA…GHAAAAAEEE (104 aa)) is disordered. Residues 86 to 96 (GHRESNGHAEA) show a composition bias toward basic and acidic residues. Positions 111–123 (AANGESNGHAAAA) are enriched in low complexity. At lysine 379 the chain carries N6-(pyridoxal phosphate)lysine.

This sequence belongs to the class-I pyridoxal-phosphate-dependent aminotransferase family. Pyridoxal 5'-phosphate serves as cofactor. In terms of tissue distribution, expressed in roots, but not in leaves.

The enzyme catalyses nicotianamine + 2-oxoglutarate = 3''-deamino-3''-oxonicotianamine + L-glutamate. Its function is as follows. Involved in biosynthesis of mugineic acid family phytosiderophores. The polypeptide is Nicotianamine aminotransferase B (Hordeum vulgare (Barley)).